The primary structure comprises 181 residues: ATP-dependent protease subunit HslV (181 aa).

T9 is a catalytic residue. G164, C167, and T170 together coordinate Na(+).

It belongs to the peptidase T1B family. HslV subfamily. As to quaternary structure, a double ring-shaped homohexamer of HslV is capped on each side by a ring-shaped HslU homohexamer. The assembly of the HslU/HslV complex is dependent on binding of ATP.

The protein localises to the cytoplasm. The catalysed reaction is ATP-dependent cleavage of peptide bonds with broad specificity.. With respect to regulation, allosterically activated by HslU binding. Its function is as follows. Protease subunit of a proteasome-like degradation complex believed to be a general protein degrading machinery. The sequence is that of ATP-dependent protease subunit HslV from Gemmatimonas aurantiaca (strain DSM 14586 / JCM 11422 / NBRC 100505 / T-27).